Consider the following 313-residue polypeptide: Protease HtpX homolog (313 aa).

Transmembrane regions (helical) follow at residues 7–24 (AMLL…GYLI) and 29–46 (GMMI…FSYW). A Zn(2+)-binding site is contributed by histidine 130. Glutamate 131 is an active-site residue. Residue histidine 134 coordinates Zn(2+). The next 2 membrane-spanning stretches (helical) occupy residues 145-165 (ITAT…FFGG) and 172-192 (PFGF…AMVV). Glutamate 201 is a Zn(2+) binding site. The interval 282–313 (GNAPPASLREDEPGADGPWGRSASRARKGPWS) is disordered.

The protein belongs to the peptidase M48B family. Zn(2+) serves as cofactor.

The protein resides in the cell inner membrane. In Chelativorans sp. (strain BNC1), this protein is Protease HtpX homolog.